The sequence spans 788 residues: Probable phosphoketolase 1 (788 aa).

Belongs to the XFP family. The cofactor is thiamine diphosphate.

In Lactiplantibacillus plantarum (strain ATCC BAA-793 / NCIMB 8826 / WCFS1) (Lactobacillus plantarum), this protein is Probable phosphoketolase 1.